The primary structure comprises 563 residues: uncharacterized protein (563 aa).

A DNA-binding region (zn(2)-C6 fungal-type) is located at residues 19–45 (CLICRRRKVKCDRQQPCSRCKERNEVC). Residues 56-78 (NVGPHPSHSENASDSETTLEVSP) are disordered. Over residues 64–75 (SENASDSETTLE) the composition is skewed to polar residues.

It localises to the nucleus. This is an uncharacterized protein from Schizosaccharomyces pombe (strain 972 / ATCC 24843) (Fission yeast).